Consider the following 206-residue polypeptide: Sperm acrosome developmental regulator (206 aa).

Residues 180–206 (RRHHVRCHAAPRPNPAQSLKLDAQSPL) form a disordered region.

As to expression, expressed in sperm (at protein level).

It localises to the cytoplasmic vesicle. The protein resides in the secretory vesicle. The protein localises to the acrosome. In terms of biological role, may play a role in acrosome formation and nucleus shaping during spermiogenesis. The polypeptide is Sperm acrosome developmental regulator (Homo sapiens (Human)).